The following is a 246-amino-acid chain: Ly6/PLAUR domain-containing protein 4 (246 aa).

The first 26 residues, 1–26 (MILQAWRSLQLLYLLEAISLLPCTEA), serve as a signal peptide directing secretion. N-linked (GlcNAc...) asparagine glycosylation occurs at Asn117. A UPAR/Ly6 domain is found at 142 to 223 (CPSCVGKHDQ…INVLDKSEAV (82 aa)). The GPI-anchor amidated alanine moiety is linked to residue Ala225. Residues 226–246 (GHCSQGISWSVLLCLLILLRD) constitute a propeptide, removed in mature form.

The protein localises to the cell membrane. This Mus musculus (Mouse) protein is Ly6/PLAUR domain-containing protein 4 (Lypd4).